The sequence spans 111 residues: Cell division protein FtsB (111 aa).

The Cytoplasmic segment spans residues 1-3 (MGK). Residues 4–21 (LTLLLLILLGWLQYSLWL) form a helical membrane-spanning segment. Residues 22–111 (GKNGIHDYVR…TNTSSNNTQR (90 aa)) are Periplasmic-facing. Residues 33–63 (KDDVVVQQGNNAKLKDRNEQLFAEIDDLNGG) adopt a coiled-coil conformation. The disordered stretch occupies residues 88–111 (VPESNHRNANTPSSTNTSSNNTQR). Residues 97–111 (NTPSSTNTSSNNTQR) show a composition bias toward low complexity.

This sequence belongs to the FtsB family. Part of a complex composed of FtsB, FtsL and FtsQ.

Its subcellular location is the cell inner membrane. Essential cell division protein. May link together the upstream cell division proteins, which are predominantly cytoplasmic, with the downstream cell division proteins, which are predominantly periplasmic. The protein is Cell division protein FtsB of Pectobacterium atrosepticum (strain SCRI 1043 / ATCC BAA-672) (Erwinia carotovora subsp. atroseptica).